The following is a 425-amino-acid chain: uncharacterized protein (425 aa).

Residues R55–L181 form the HD domain.

This is an uncharacterized protein from Mycoplasma genitalium (strain ATCC 33530 / DSM 19775 / NCTC 10195 / G37) (Mycoplasmoides genitalium).